Here is a 69-residue protein sequence, read N- to C-terminus: MAEVKQESLSGITEGEAKEFHKIFTSSILVFFGVAAFAHLLVWIWRPWVPGPNGYSALETLTQTLTYLS.

Positions 1-2 (MA) are excised as a propeptide. The Cytoplasmic segment spans residues 3 to 22 (EVKQESLSGITEGEAKEFHK). 2 residues coordinate a bacteriochlorophyll: histidine 21 and histidine 39. Residues 23–45 (IFTSSILVFFGVAAFAHLLVWIW) form a helical membrane-spanning segment. Over 46–56 (RPWVPGPNGYS) the chain is Periplasmic. Positions 57–69 (ALETLTQTLTYLS) are excised as a propeptide.

It belongs to the antenna complex beta subunit family. As to quaternary structure, the core complex is formed by different alpha and beta chains, binding bacteriochlorophyll molecules, and arranged most probably in tetrameric structures disposed around the reaction center. The non-pigmented gamma chains may constitute additional components.

It localises to the cell inner membrane. In terms of biological role, antenna complexes are light-harvesting systems, which transfer the excitation energy to the reaction centers. The polypeptide is Light-harvesting protein B-870 beta chain (Rhodospirillum rubrum (strain ATCC 11170 / ATH 1.1.1 / DSM 467 / LMG 4362 / NCIMB 8255 / S1)).